A 197-amino-acid polypeptide reads, in one-letter code: UPF0637 protein LEUM_0496 (197 aa).

The protein belongs to the UPF0637 family.

The chain is UPF0637 protein LEUM_0496 from Leuconostoc mesenteroides subsp. mesenteroides (strain ATCC 8293 / DSM 20343 / BCRC 11652 / CCM 1803 / JCM 6124 / NCDO 523 / NBRC 100496 / NCIMB 8023 / NCTC 12954 / NRRL B-1118 / 37Y).